Here is a 102-residue protein sequence, read N- to C-terminus: ATP-dependent Clp protease adapter protein ClpS (102 aa).

This sequence belongs to the ClpS family. Binds to the N-terminal domain of the chaperone ClpA.

Its function is as follows. Involved in the modulation of the specificity of the ClpAP-mediated ATP-dependent protein degradation. This is ATP-dependent Clp protease adapter protein ClpS from Shewanella oneidensis (strain ATCC 700550 / JCM 31522 / CIP 106686 / LMG 19005 / NCIMB 14063 / MR-1).